A 430-amino-acid chain; its full sequence is Delta(14)-sterol reductase (430 aa).

6 consecutive transmembrane segments (helical) span residues 12–32, 67–87, 109–129, 230–250, 267–287, and 290–310; these read IGTGVLMLILPPISHYLHFLI, LAVAAYYLLLVALMYVLPAEI, FLVFFTFLGTMTVLEGPTWWF, FVSDSIVLVNLFETWYVVDAL, LGVMLLFGNAVWVPFMYCLQA, and LASFPVHLGLLGIAGVLAVQF. NADP(+) contacts are provided by residues Lys323, Arg327, Leu350, Trp355, and 362–363; that span reads NY. 2 helical membrane passes run 349–369 and 376–396; these read LLISGWWGVARHVNYFGDWIM and TTGFNTPLTYFYVIYFGILLL. Residues Asp402, 406–410, and Tyr417 each bind NADP(+); that span reads CREKY.

This sequence belongs to the ERG4/ERG24 family.

The protein resides in the membrane. It catalyses the reaction 4,4-dimethyl-5alpha-cholesta-8,24-dien-3beta-ol + NADP(+) = 4,4-dimethyl-5alpha-cholesta-8,14,24-trien-3beta-ol + NADPH + H(+). It functions in the pathway steroid biosynthesis; zymosterol biosynthesis; zymosterol from lanosterol: step 2/6. Reduces the C14=C15 double bond of 4,4-dimethyl-cholesta-8,14,24-trienol to produce 4,4-dimethyl-cholesta-8,24-dienol. The polypeptide is Delta(14)-sterol reductase (ERG3) (Ascobolus immersus).